A 232-amino-acid polypeptide reads, in one-letter code: Octanoyltransferase (232 aa).

Residues 44 to 219 (EYTADEIWVV…QLARQFGLVL (176 aa)) form the BPL/LPL catalytic domain. Substrate-binding positions include 83 to 90 (RGGQVTYH), 150 to 152 (ALG), and 163 to 165 (GLS). Cysteine 181 serves as the catalytic Acyl-thioester intermediate.

Belongs to the LipB family.

Its subcellular location is the cytoplasm. It catalyses the reaction octanoyl-[ACP] + L-lysyl-[protein] = N(6)-octanoyl-L-lysyl-[protein] + holo-[ACP] + H(+). It functions in the pathway protein modification; protein lipoylation via endogenous pathway; protein N(6)-(lipoyl)lysine from octanoyl-[acyl-carrier-protein]: step 1/2. Catalyzes the transfer of endogenously produced octanoic acid from octanoyl-acyl-carrier-protein onto the lipoyl domains of lipoate-dependent enzymes. Lipoyl-ACP can also act as a substrate although octanoyl-ACP is likely to be the physiological substrate. This chain is Octanoyltransferase, found in Xanthomonas axonopodis pv. citri (strain 306).